Reading from the N-terminus, the 256-residue chain is Trypsin epsilon (256 aa).

The first 22 residues, 1 to 22 (MLKIAVLLSVLACALAGTIPDG), serve as a signal peptide directing secretion. Residues 23–30 (LLPQLDGR) constitute a propeptide, activation peptide. Residues 31–254 (IVGGYETSID…FHEWIERTAR (224 aa)) form the Peptidase S1 domain. Cys56 and Cys72 are disulfide-bonded. Active-site charge relay system residues include His71 and Asp116. Cystine bridges form between Cys180/Cys197 and Cys206/Cys230. The active-site Charge relay system is the Ser210.

It belongs to the peptidase S1 family.

The protein resides in the secreted. The protein localises to the extracellular space. The enzyme catalyses Preferential cleavage: Arg-|-Xaa, Lys-|-Xaa.. The chain is Trypsin epsilon (epsilonTry) from Drosophila erecta (Fruit fly).